Here is an 803-residue protein sequence, read N- to C-terminus: Pesticidal crystal protein Cry13Aa (803 aa).

Belongs to the delta endotoxin family.

Endotoxin with nematicidal activity. The protein is Pesticidal crystal protein Cry13Aa (cry13Aa) of Bacillus thuringiensis.